The sequence spans 447 residues: Tubulin beta-2 chain (447 aa).

GTP is bound by residues Q11, E69, S138, G142, T143, G144, N204, and N226. E69 lines the Mg(2+) pocket. A compositionally biased stretch (polar residues) spans 419-428; it reads VSEYQQYQDA. Residues 419-447 are disordered; sequence VSEYQQYQDATSDEEGEYEDEDQEPEEDM. Residues 429-447 are compositionally biased toward acidic residues; sequence TSDEEGEYEDEDQEPEEDM.

Belongs to the tubulin family. In terms of assembly, dimer of alpha and beta chains. A typical microtubule is a hollow water-filled tube with an outer diameter of 25 nm and an inner diameter of 15 nM. Alpha-beta heterodimers associate head-to-tail to form protofilaments running lengthwise along the microtubule wall with the beta-tubulin subunit facing the microtubule plus end conferring a structural polarity. Microtubules usually have 13 protofilaments but different protofilament numbers can be found in some organisms and specialized cells. It depends on Mg(2+) as a cofactor.

Its subcellular location is the cytoplasm. It localises to the cytoskeleton. Functionally, tubulin is the major constituent of microtubules, a cylinder consisting of laterally associated linear protofilaments composed of alpha- and beta-tubulin heterodimers. Microtubules grow by the addition of GTP-tubulin dimers to the microtubule end, where a stabilizing cap forms. Below the cap, tubulin dimers are in GDP-bound state, owing to GTPase activity of alpha-tubulin. This Triticum aestivum (Wheat) protein is Tubulin beta-2 chain (TUBB2).